Reading from the N-terminus, the 107-residue chain is Replication initiation control protein YabA (107 aa).

His80, Cys82, Cys97, and Cys100 together coordinate Zn(2+).

Belongs to the YabA family. In terms of assembly, homotetramer. Interacts with both DnaA and DnaN, acting as a bridge between these two proteins. Zn(2+) is required as a cofactor.

It is found in the cytoplasm. It localises to the nucleoid. Involved in control of chromosome replication initiation. Inhibits the cooperative binding of DnaA to the oriC region, thus negatively regulating initiation of chromosome replication. Inhibits the ability of DnaA-ATP to form a helix on DNA; does not disassemble preformed DnaA-DNA helices. Decreases the residence time of DnaA on the chromosome at its binding sites (oriC, replication forks and promoter-binding sites). Tethers DnaA to the replication machinery via the DNA polymerase beta sliding clamp subunit (dnaN). Associates with oriC and other DnaA targets on the chromosome in a DnaA-dependent manner. The chain is Replication initiation control protein YabA from Streptococcus gordonii (strain Challis / ATCC 35105 / BCRC 15272 / CH1 / DL1 / V288).